Reading from the N-terminus, the 336-residue chain is Ketoreductase adrE (336 aa).

NADP(+) is bound at residue tyrosine 171.

This sequence belongs to the NAD(P)-dependent epimerase/dehydratase family. Dihydroflavonol-4-reductase subfamily.

Its pathway is secondary metabolite biosynthesis; terpenoid biosynthesis. In terms of biological role, ketoreductase; part of the gene cluster that mediates the biosynthesis of andrastins, meroterpenoid compounds that exhibit inhibitory activity against ras farnesyltransferase, suggesting that they could be promising leads for antitumor agents. The first step of the pathway is the synthesis of 3,5-dimethylorsellinic acid (DMOA) by the polyketide synthase adrD via condensation of one acetyl-CoA starter unit with 3 malonyl-CoA units and 2 methylations. DMAO is then converted to farnesyl-DMAO by the prenyltransferase adrG. The methyltransferase adrK catalyzes the methylation of the carboxyl group of farnesyl-DMAO to farnesyl-DMAO methyl ester which is further converted to epoxyfarnesyl-DMAO methyl ester by the FAD-dependent monooxygenase adrH. The terpene cyclase adrI then catalyzes the carbon skeletal rearrangement to generate the andrastin E, the first compound in the pathway having the andrastin scaffold, with the tetracyclic ring system. The post-cyclization tailoring enzymes adrF, adrE, adrJ, and adrA, are involved in the conversion of andrastin E into andrastin A. The short chain dehydrogenase adrF is responsible for the oxidation of the C-3 a hydroxyl group of andrastin E to yield the corresponding ketone, andrastin D. The ketoreductase adrE stereoselectively reduces the carbonyl moiety to reverse the stereochemistry of the C-3 position to yield andrastin F. The acetyltransferase adrJ is the acetyltransferase that attaches the acetyl group to the C-3 hydroxyl group of andrastin F to yield andrastin C. Finally, the cytochrome P450 monooxygenase adrA catalyzes two sequential oxidation reactions of the C-23 methyl group, to generate the corresponding alcohol andrastin B, and aldehyde andrastin A. The sequence is that of Ketoreductase adrE from Penicillium rubens (strain ATCC 28089 / DSM 1075 / NRRL 1951 / Wisconsin 54-1255) (Penicillium chrysogenum).